A 475-amino-acid chain; its full sequence is Ankyrin repeat, SAM and basic leucine zipper domain-containing protein 1 (475 aa).

Positions Met-1–Trp-25 are disordered. Residues Ser-17, Ser-18, and Ser-20 each carry the phosphoserine modification. ANK repeat units lie at residues Glu-45–Ser-74, Tyr-78–Phe-107, Asp-110–Val-144, Arg-148–Thr-177, Asn-181–Leu-210, and Asp-214–Gly-243. The 63-residue stretch at Ser-272–Gln-334 folds into the SAM domain.

In terms of assembly, interacts with DDX4, PIWIL1, RANBP9 and TDRD1.

The protein resides in the cytoplasm. Plays a central role during spermatogenesis by repressing transposable elements and preventing their mobilization, which is essential for the germline integrity. Acts via the piRNA metabolic process, which mediates the repression of transposable elements during meiosis by forming complexes composed of piRNAs and Piwi proteins and governs the methylation and subsequent repression of transposons. Its association with pi-bodies suggests a participation in the primary piRNAs metabolic process. Required prior to the pachytene stage to facilitate the production of multiple types of piRNAs, including those associated with repeats involved in the regulation of retrotransposons. May act by mediating protein-protein interactions during germ cell maturation. The polypeptide is Ankyrin repeat, SAM and basic leucine zipper domain-containing protein 1 (ASZ1) (Papio anubis (Olive baboon)).